We begin with the raw amino-acid sequence, 314 residues long: Olfactory receptor 4K2 (314 aa).

The Extracellular segment spans residues M1 to M25. The N-linked (GlcNAc...) asparagine glycan is linked to N5. The helical transmembrane segment at F26–V49 threads the bilayer. At I50 to S57 the chain is on the cytoplasmic side. A helical membrane pass occupies residues P58–P79. The Extracellular portion of the chain corresponds to K80–Q100. A disulfide bridge links C97 with C189. The chain crosses the membrane as a helical span at residues I101–F120. Residues D121–Q139 lie on the Cytoplasmic side of the membrane. A helical transmembrane segment spans residues V140 to S158. The Extracellular segment spans residues Q159–L195. Residues G196–V219 form a helical membrane-spanning segment. The Cytoplasmic portion of the chain corresponds to I220 to K235. The chain crosses the membrane as a helical span at residues A236–Y258. Residues M259–K269 are Extracellular-facing. A helical membrane pass occupies residues I270–L289. The Cytoplasmic portion of the chain corresponds to R290 to S314.

The protein belongs to the G-protein coupled receptor 1 family.

It is found in the cell membrane. Its function is as follows. Odorant receptor. This is Olfactory receptor 4K2 (OR4K2) from Homo sapiens (Human).